Consider the following 544-residue polypeptide: Chaperonin GroEL (544 aa).

ATP is bound by residues 30–33, lysine 51, 87–91, glycine 415, and aspartate 495; these read TLGP and DGTTT.

The protein belongs to the chaperonin (HSP60) family. In terms of assembly, forms a cylinder of 14 subunits composed of two heptameric rings stacked back-to-back. Interacts with the co-chaperonin GroES.

It is found in the cytoplasm. The enzyme catalyses ATP + H2O + a folded polypeptide = ADP + phosphate + an unfolded polypeptide.. Its function is as follows. Together with its co-chaperonin GroES, plays an essential role in assisting protein folding. The GroEL-GroES system forms a nano-cage that allows encapsulation of the non-native substrate proteins and provides a physical environment optimized to promote and accelerate protein folding. The sequence is that of Chaperonin GroEL from Neisseria gonorrhoeae (strain ATCC 700825 / FA 1090).